The sequence spans 107 residues: Somatoliberin (107 aa).

Residues 1 to 19 (MPLWVFFVILTLTNGSHCS) form the signal peptide. A propeptide spanning residues 20–30 (PSPSLPFRIRR) is cleaved from the precursor. The residue at position 74 (Leu74) is a Leucine amide. The propeptide occupies 77–107 (QVDSMWADHRQMSLESLLAALLQKHSRDSQG).

This sequence belongs to the glucagon family.

It is found in the secreted. Its function is as follows. GRF is released by the hypothalamus and acts on the adenohypophyse to stimulate the secretion of growth hormone. The sequence is that of Somatoliberin (GHRH) from Mesocricetus auratus (Golden hamster).